Here is a 299-residue protein sequence, read N- to C-terminus: Trimeric intracellular cation channel type A (299 aa).

Topologically, residues 1–18 are lumenal; the sequence is MELLSALSLGELALSFSR. Residues 19 to 39 traverse the membrane as a helical segment; the sequence is VPLFPVFDLSYFIVSILYLKY. Over 40 to 51 the chain is Cytoplasmic; that stretch reads EPGAVELSRRHP. Residues 52–72 traverse the membrane as a helical segment; the sequence is IASWLCAMLHCFGSYILADLL. Residues 73 to 85 lie on the Lumenal side of the membrane; sequence LGEPLIDYFSNNS. Ca(2+) is bound at residue G74. Residues 86–106 form a helical membrane-spanning segment; it reads SILLASAVWYLIFFCPLDLFY. The Cytoplasmic portion of the chain corresponds to 107–144; the sequence is KCVCFLPVKLIFVAMKEVVRVRKIAVGIHHAHHHYHHG. K122 and R126 together coordinate a 1,2-diacyl-sn-glycero-3-phospho-(1D-myo-inositol-4,5-bisphosphate). A helical transmembrane segment spans residues 145-165; sequence WFVMIATGWVKGSGVALMSNF. Topologically, residues 166 to 178 are lumenal; the sequence is EQLLRGVWKPETN. A helical membrane pass occupies residues 179–199; it reads EILHMSFPTKASLYGAILFTL. Over 200–209 the chain is Cytoplasmic; the sequence is QQTRWLPVSK. The chain crosses the membrane as a helical span at residues 210–230; that stretch reads ASLIFIFTLFMVSCKVFLTAT. The Lumenal segment spans residues 231–234; it reads HSHS. Residues 235–255 form a helical membrane-spanning segment; sequence SPFDALEGYICPVLFGSACGG. Residues 256–299 lie on the Cytoplasmic side of the membrane; sequence DHHHDNHGGSHSGGGPGAQHSAMPAKSKEELSEGSRKKKAKKAD. Residues 260 to 299 form a disordered region; that stretch reads DNHGGSHSGGGPGAQHSAMPAKSKEELSEGSRKKKAKKAD. The span at 281–290 shows a compositional bias: basic and acidic residues; that stretch reads KSKEELSEGS.

The protein belongs to the TMEM38 family. As to quaternary structure, homotrimer; conformation seems to be controled by binding to diacylglycerol (DAG).

It localises to the sarcoplasmic reticulum membrane. The protein resides in the nucleus membrane. The catalysed reaction is K(+)(in) = K(+)(out). Its activity is regulated as follows. Channel activity is activated by a change of voltage within the sarcoplasmic reticulum lumen and blocked by luminal high Ca(2+) levels. Functionally, intracellular monovalent cation channel required for maintenance of rapid intracellular calcium release. Acts as a potassium counter-ion channel that functions in synchronization with calcium release from intracellular stores. Opened by a change of voltage within the sarcoplasmic reticulum lumen. The sequence is that of Trimeric intracellular cation channel type A from Homo sapiens (Human).